The chain runs to 329 residues: GMP reductase (329 aa).

The active-site Thioimidate intermediate is C178. 207–230 contacts NADP(+); it reads VIADGGIRTHGDIAKSIRMGATMV.

This sequence belongs to the IMPDH/GMPR family. GuaC type 2 subfamily.

It catalyses the reaction IMP + NH4(+) + NADP(+) = GMP + NADPH + 2 H(+). Functionally, catalyzes the irreversible NADPH-dependent deamination of GMP to IMP. It functions in the conversion of nucleobase, nucleoside and nucleotide derivatives of G to A nucleotides, and in maintaining the intracellular balance of A and G nucleotides. This chain is GMP reductase, found in Lactococcus lactis subsp. cremoris (strain SK11).